A 370-amino-acid chain; its full sequence is Proto-oncogene Wnt-1 (370 aa).

A signal peptide spans 1 to 27; sequence MGLWALLPGWVSATLLLALAALPAALA. A glycan (N-linked (GlcNAc...) asparagine) is linked at Asn-29. Intrachain disulfides connect Cys-93/Cys-104, Cys-143/Cys-151, Cys-153/Cys-170, Cys-218/Cys-232, Cys-220/Cys-227, Cys-299/Cys-330, Cys-315/Cys-325, Cys-329/Cys-369, Cys-345/Cys-360, Cys-347/Cys-357, and Cys-352/Cys-353. Ser-224 is lipidated: O-palmitoleoyl serine; by PORCN. 2 N-linked (GlcNAc...) asparagine glycosylation sites follow: Asn-316 and Asn-346. N-linked (GlcNAc...) asparagine glycosylation is present at Asn-359.

This sequence belongs to the Wnt family. As to quaternary structure, forms a soluble 1:1 complex with AFM; this prevents oligomerization and is required for prolonged biological activity. The complex with AFM may represent the physiological form in body fluids. Interacts with PORCN. Interacts with RSPO1, RSPO2 and RSPO3. Interacts with WLS. Post-translationally, palmitoleoylation is required for efficient binding to frizzled receptors. Palmitoleoylation is necessary for proper trafficking to cell surface. Depalmitoleoylated by NOTUM, leading to inhibit Wnt signaling pathway.

It localises to the secreted. The protein localises to the extracellular space. The protein resides in the extracellular matrix. In terms of biological role, ligand for members of the frizzled family of seven transmembrane receptors. Acts in the canonical Wnt signaling pathway by promoting beta-catenin-dependent transcriptional activation. In some developmental processes, is also a ligand for the coreceptor RYK, thus triggering Wnt signaling. Plays an essential role in the development of the embryonic brain and central nervous system (CNS). Has a role in osteoblast function, bone development and bone homeostasis. The polypeptide is Proto-oncogene Wnt-1 (WNT1) (Homo sapiens (Human)).